Consider the following 170-residue polypeptide: ATP synthase subunit b (170 aa).

Residues 15-37 (GDILFQLLAMLILLALLKKYALG) traverse the membrane as a helical segment.

The protein belongs to the ATPase B chain family. F-type ATPases have 2 components, F(1) - the catalytic core - and F(0) - the membrane proton channel. F(1) has five subunits: alpha(3), beta(3), gamma(1), delta(1), epsilon(1). F(0) has three main subunits: a(1), b(2) and c(10-14). The alpha and beta chains form an alternating ring which encloses part of the gamma chain. F(1) is attached to F(0) by a central stalk formed by the gamma and epsilon chains, while a peripheral stalk is formed by the delta and b chains. The F(1)F(0) complex interacts with SpoIIIJ and YqjG; YqgA is found in the same complex.

It is found in the cell membrane. Its function is as follows. F(1)F(0) ATP synthase produces ATP from ADP in the presence of a proton or sodium gradient. F-type ATPases consist of two structural domains, F(1) containing the extramembraneous catalytic core and F(0) containing the membrane proton channel, linked together by a central stalk and a peripheral stalk. During catalysis, ATP synthesis in the catalytic domain of F(1) is coupled via a rotary mechanism of the central stalk subunits to proton translocation. Component of the F(0) channel, it forms part of the peripheral stalk, linking F(1) to F(0). In Bacillus subtilis (strain 168), this protein is ATP synthase subunit b.